A 419-amino-acid chain; its full sequence is Isocitrate dehydrogenase [NADP] 1 (419 aa).

Thr105 provides a ligand contact to NADP(+). D-threo-isocitrate-binding residues include Ser114, Asn116, Arg120, Arg130, and Arg154. A Mg(2+)-binding site is contributed by Asp308. NADP(+)-binding positions include 340 to 346 (HGTAPKY), Asn353, Tyr392, and Arg396.

This sequence belongs to the isocitrate and isopropylmalate dehydrogenases family. As to quaternary structure, homodimer. Mg(2+) is required as a cofactor. The cofactor is Mn(2+).

It catalyses the reaction D-threo-isocitrate + NADP(+) = 2-oxoglutarate + CO2 + NADPH. IDH activity is not significantly affected by monovalent cations. The combined addition of Mn(2+) and another divalent cation results in the decrease of the activity. Its function is as follows. Catalyzes the oxidative decarboxylation of isocitrate to 2-oxoglutarate and carbon dioxide with the concomitant reduction of NADP(+). Cannot use NAD(+). In Psychrobacter sp. (strain 13A), this protein is Isocitrate dehydrogenase [NADP] 1.